A 307-amino-acid polypeptide reads, in one-letter code: N-acetylneuraminate lyase (307 aa).

The aceneuramate site is built by threonine 51 and threonine 52. Tyrosine 143 serves as the catalytic Proton donor. Lysine 173 acts as the Schiff-base intermediate with substrate in catalysis. 5 residues coordinate aceneuramate: serine 175, glycine 199, aspartate 201, glutamate 202, and serine 218.

The protein belongs to the DapA family. NanA subfamily. As to quaternary structure, homotetramer.

It is found in the cytoplasm. The enzyme catalyses aceneuramate = aldehydo-N-acetyl-D-mannosamine + pyruvate. It participates in amino-sugar metabolism; N-acetylneuraminate degradation. Its function is as follows. Catalyzes the cleavage of N-acetylneuraminic acid (sialic acid) to form pyruvate and N-acetylmannosamine via a Schiff base intermediate. It prevents sialic acids from being recycled and returning to the cell surface. Involved in the N-glycolylneuraminic acid (Neu5Gc) degradation pathway. The polypeptide is N-acetylneuraminate lyase (Danio rerio (Zebrafish)).